Here is a 107-residue protein sequence, read N- to C-terminus: Diuretic hormone 45 (107 aa).

A propeptide spanning residues 1–44 is cleaved from the precursor; sequence LYAMSPMAARYSAGAPWLYLLADMPRDSQRLVDPADLHEGRARP. Val91 is modified (valine amide).

Expressed in corpora cardiaca (CC), corpora allata (CA), antennal lobe (AL) and gnathal ganglion (GNG) (at protein level). Expression in AL and GNG detected in some animals, in CC and CA in few animals (at protein level).

The protein localises to the secreted. Its function is as follows. Regulation of fluid secretion. This Agrotis ipsilon (Black cutworm moth) protein is Diuretic hormone 45.